Reading from the N-terminus, the 543-residue chain is Probable zinc transporter protein DDB_G0283629 (543 aa).

The tract at residues 1–175 is disordered; sequence MENFKNNELE…EESKPLNQLR (175 aa). Residues 1–186 are Cytoplasmic-facing; it reads MENFKNNELE…LDSKKKARYS (186 aa). Low complexity-rich tracts occupy residues 11–26 and 41–55; these read SSPI…SINN and NNNN…NSHI. Basic and acidic residues-rich tracts occupy residues 56-66 and 76-104; these read NNHDHKHNHEH and HNHD…EHNV. The segment covering 105–116 has biased composition (low complexity); it reads GNKNLLTNNNNQ. The segment covering 130–140 has biased composition (gly residues); the sequence is EDGSSSGGGGG. A helical membrane pass occupies residues 187–207; it reads LILALTLTTIFMVGEIVGGYF. Topologically, residues 208–216 are extracellular; sequence ANSLAIMTD. A helical transmembrane segment spans residues 217–237; the sequence is AAHLLTDIGAMFLSLFAMWIS. The Cytoplasmic segment spans residues 238 to 251; sequence QHPPTSSMSFGFHR. A helical transmembrane segment spans residues 252-272; the sequence is AEILGALVSVLMIWALTGVLV. Topologically, residues 273 to 289 are extracellular; it reads YEAIQRILYPPDAVDGK. A helical transmembrane segment spans residues 290–310; the sequence is IMFIIASCGLFINIIDAIILH. The Cytoplasmic segment spans residues 311–375; that stretch reads WGSGGHGHSH…VRNINVHSAY (65 aa). Positions 319 to 342 are disordered; the sequence is SHGGGHGHSHGIGGGTQKKKSKKN. The helical transmembrane segment at 376–396 threads the bilayer; the sequence is IHVLGDCFQSIGVMVASCIIW. Over 397–402 the chain is Extracellular; the sequence is VHPHWK. Residues 403 to 423 form a helical membrane-spanning segment; the sequence is IADPITTLIFSVIVLGTTIKL. Over 424-543 the chain is Cytoplasmic; it reads LRESLGVLME…NDNLSSPPNQ (120 aa). The disordered stretch occupies residues 516-543; the sequence is KCKDHSCPPPKPKKKKIKNDNLSSPPNQ.

It belongs to the cation diffusion facilitator (CDF) transporter (TC 2.A.4) family. SLC30A subfamily.

It is found in the membrane. May be involved in zinc transport from the cytoplasm to either intracellular organelles or extracellular spaces. The sequence is that of Probable zinc transporter protein DDB_G0283629 from Dictyostelium discoideum (Social amoeba).